The sequence spans 797 residues: MAP/microtubule affinity-regulating kinase 3 (797 aa).

A disordered region spans residues 1–35 (MSTRTPLPTVNERDTENHISHGDGRQEVTSRTGRS). Basic and acidic residues predominate over residues 11–28 (NERDTENHISHGDGRQEV). The residue at position 42 (S42) is a Phosphoserine. The region spanning 56–307 (YRLLKTIGKG…LEQIMKDRWI (252 aa)) is the Protein kinase domain. ATP contacts are provided by residues 62–70 (IGKGNFAKV) and K85. The active-site Proton acceptor is the D178. The residue at position 211 (T211) is a Phosphothreonine; by LKB1. Residues 326-365 (ISDQKRIDIMVGMGYSQEEIQESLSKMKYDEITATYLLLG) enclose the UBA domain. A phosphoserine mark is found at S368, S374, S376, S380, S383, S400, S419, and S469. Disordered regions lie at residues 372–504 (DASD…GMTR) and 585–701 (PDQR…KPRS). A compositionally biased stretch (low complexity) spans 374–385 (SDSSSSSNLSLA). The segment covering 391 to 400 (SDLSNSTGQS) has biased composition (polar residues). Polar residues-rich tracts occupy residues 492–504 (VPSS…GMTR) and 585–602 (PDQR…SATT). Phosphoserine is present on residues S593 and S596. At T602 the chain carries Phosphothreonine. T617 bears the Phosphothreonine; by PKC/PRKCZ mark. 3 positions are modified to phosphoserine: S636, S651, and S654. Positions 637-664 (PSLSHEATPLSQTRSRGSTNLFSKLTSK) are enriched in polar residues. A compositionally biased stretch (basic and acidic residues) spans 669–678 (LPTEYERNGR). S687 is modified (phosphoserine). The span at 689–699 (EQKDENREAKP) shows a compositional bias: basic and acidic residues. The region spanning 748–797 (DGHAESLVQWEMEVCKLPRLSLNGVRFKRISGTSIAFKNIASKIANELKL) is the KA1 domain.

This sequence belongs to the protein kinase superfamily. CAMK Ser/Thr protein kinase family. SNF1 subfamily. In terms of assembly, interacts with MAPT/TAU. Interacts with DLG5 (via coiled-coil domain). Interacts with STK3/MST2 and STK4/MST1 in the presence of DLG5. Interacts with YWHAB, YWHAG, YWHAQ and YWHAZ. Interacts with PKP2 (via N-terminus). Interacts with CDC25C. Interacts with KSR1. In terms of processing, phosphorylated at Thr-211 by STK11/LKB1 in complex with STE20-related adapter-alpha (STRADA) pseudo kinase and CAB39. Phosphorylation at Thr-617 by PRKCZ/aPKC inhibits the kinase activity.

The protein resides in the cell membrane. Its subcellular location is the cell projection. It localises to the dendrite. The protein localises to the cytoplasm. It catalyses the reaction L-seryl-[protein] + ATP = O-phospho-L-seryl-[protein] + ADP + H(+). The enzyme catalyses L-threonyl-[protein] + ATP = O-phospho-L-threonyl-[protein] + ADP + H(+). With respect to regulation, activated by phosphorylation on Thr-211. Inhibited by phosphorylation on Thr-617. In terms of biological role, serine/threonine-protein kinase. Involved in the specific phosphorylation of microtubule-associated proteins for MAP2 and MAP4. Phosphorylates the microtubule-associated protein MAPT/TAU. Phosphorylates CDC25C on 'Ser-216'. Regulates localization and activity of some histone deacetylases by mediating phosphorylation of HDAC7, promoting subsequent interaction between HDAC7 and 14-3-3 and export from the nucleus. Regulates localization and activity of MITF by mediating its phosphorylation, promoting subsequent interaction between MITF and 14-3-3 and retention in the cytosol. Negatively regulates the Hippo signaling pathway and antagonizes the phosphorylation of LATS1. Cooperates with DLG5 to inhibit the kinase activity of STK3/MST2 toward LATS1. Phosphorylates PKP2 and KSR1. This Rattus norvegicus (Rat) protein is MAP/microtubule affinity-regulating kinase 3 (Mark3).